The chain runs to 459 residues: Ceramide glucosyltransferase 3 (459 aa).

The chain crosses the membrane as a helical span at residues 77 to 97; it reads LIAIVGFVFVFCLYLIHIIAL. Position 156 (aspartate 156) is a short sequence motif, D1. A short sequence motif (D2) is located at residue aspartate 208. Residue aspartate 302 is a short sequence motif, D3. Catalysis depends on aspartate 302, which acts as the Proton acceptor. A (Q/R)XXRW motif is present at residues 338-342; that stretch reads RICRW. The next 2 helical transmembrane spans lie at 367-387 and 415-435; these read LIMA…ILIL and FMLI…KALL.

Belongs to the glycosyltransferase 2 family. In terms of tissue distribution, expressed in pharyngeal intestinal valve, intestinal rectal valve and hypodermis.

The protein localises to the membrane. The catalysed reaction is an N-acylsphing-4-enine + UDP-alpha-D-glucose = a beta-D-glucosyl-(1&lt;-&gt;1')-N-acylsphing-4-enine + UDP + H(+). It carries out the reaction an N-acyl-15-methylhexadecasphing-4-enine + UDP-alpha-D-glucose = an N-acyl-1-beta-D-glucosyl-15-methylhexadecasphing-4-enine + UDP + H(+). It participates in lipid metabolism; sphingolipid metabolism. Its function is as follows. Catalyzes the first glycosylation step in glycosphingolipid biosynthesis, the transfer of glucose to ceramide to produce glucosylceramides (GlcCer). GlcCer are known to contribute to the physical properties and physiological functions of membranes and may regulate signal transduction. Seems to be the major active form in the nematode. Only branched-chain sphingoid bases like 15-methylhexadecasphing-4-enine are used for generating complex sphingolipids in Caenorhabditis elegans. Together with cgt-1, plays a role in the trafficking of proteins such as mig-14 to the cell membrane in intestinal cells. The polypeptide is Ceramide glucosyltransferase 3 (Caenorhabditis elegans).